Here is a 426-residue protein sequence, read N- to C-terminus: Glutamate/glutamine/aspartate/asparagine transport system permease protein BztB (426 aa).

8 helical membrane passes run 25–45, 96–116, 132–152, 211–231, 252–272, 293–313, 340–360, and 396–416; these read SITIQIVVLLLFLAGLVWLLN, LLVSVLGCILATILGTIIGVL, VETFRNIPLLLWILLMGTILA, LPVSLNALAILAVMSASFWGW, WWPSLLILFAPISALLYGLGF, SFTALLIALTLYTAAFIAEIV, SLVILPQALRVIVPPLISQFL, and MLLMMLIYLTISLTISSLMNL. The ABC transmembrane type-1 domain maps to 92 to 414; the sequence is LLNTLLVSVL…TISLTISSLM (323 aa).

It belongs to the binding-protein-dependent transport system permease family. HisMQ subfamily. As to quaternary structure, bztB and BztC form a heterodimer which can form a membrane complex with a homodimer of BztD.

It is found in the cell inner membrane. In terms of biological role, part of a binding-protein-dependent transport system for glutamate, glutamine, aspartate and asparagine. Probably responsible for the translocation of the substrate across the membrane. This Rhodobacter capsulatus (strain ATCC BAA-309 / NBRC 16581 / SB1003) protein is Glutamate/glutamine/aspartate/asparagine transport system permease protein BztB (bztB).